Consider the following 256-residue polypeptide: Agamous-like MADS-box protein AGL18 (256 aa).

An MADS-box domain is found at 1 to 61 (MGRGRIEIKK…GKIYDFSSVC (61 aa)). One can recognise a K-box domain in the interval 94 to 184 (NEAVLRNDDS…RKQVEMLGRG (91 aa)). The tract at residues 179-232 (EMLGRGSGPKVLNERPQDSSPEADPESSSSEEDENDNEEHHSDTSLQLGLSSTG) is disordered. Residues 199–215 (PEADPESSSSEEDENDN) are compositionally biased toward acidic residues. A compositionally biased stretch (polar residues) spans 222 to 232 (TSLQLGLSSTG).

In terms of tissue distribution, mostly expressed in pollen, roots, flowers and siliques, and to a lower extent, in stems and leaves. Expressed in the endosperm and in developing male and female gametophytes. Also present in seedlings.

The protein resides in the nucleus. In terms of biological role, probable transcription factor involved in the negative regulation of flowering, probably through the photoperiodic pathway. Prevents premature flowering. Downstream regulator of a subset of the MIKC* MADS-controlled genes required during pollen maturation. This chain is Agamous-like MADS-box protein AGL18 (AGL18), found in Arabidopsis thaliana (Mouse-ear cress).